We begin with the raw amino-acid sequence, 392 residues long: Major outer membrane porin (392 aa).

The first 22 residues, 1–22 (MKKLLKSALLFAAAGSALSLQA), serve as a signal peptide directing secretion.

The protein belongs to the chlamydial porin (CP) (TC 1.B.2) family. As to quaternary structure, part of a disulfide cross-linked outer membrane complex (COMC) composed of the major outer membrane porin (MOMP), the small cysteine-rich protein (OmcA) and the large cysteine-rich periplasmic protein (OmcB).

The protein localises to the cell outer membrane. In elementary bodies (EBs, the infectious stage, which is able to survive outside the host cell) provides the structural integrity of the outer envelope through disulfide cross-links with the small cysteine-rich protein and the large cysteine-rich periplasmic protein. It has been described in publications as the Sarkosyl-insoluble COMC (Chlamydia outer membrane complex), and serves as the functional equivalent of peptidoglycan. Functionally, permits diffusion of specific solutes through the outer membrane. This Chlamydia psittaci (Chlamydophila psittaci) protein is Major outer membrane porin (ompA).